Reading from the N-terminus, the 127-residue chain is PanD regulatory factor (127 aa).

The N-acetyltransferase domain occupies 1–127; the sequence is MKLTIIRLEK…TAQQGGWEKC (127 aa). Interaction with PanD stretches follow at residues 43 to 48 and 66 to 76; these read RFNERL and LRVREVTRRRG. CoA is bound by residues 66 to 68 and 72 to 79; these read LRV and TRRRGVGQ.

It belongs to the PanZ/PanM family. As to quaternary structure, interacts with PanD in the presence of CoA. Forms a heterooctameric complex composed of four PanD subunits and four PanZ subunits. Monomer in solution.

Its activity is regulated as follows. Activation of PanD processing occurs even at low CoA concentrations. In contrast, full inhibition of PanD catalytic activity only occurs at sufficiently high CoA concentrations. Its function is as follows. Controls both the activation and catalytic activity of PanD in a coenzyme A (CoA)-dependent fashion. Binding of CoA or a derivative to PanZ leads to interaction with PanD, which promotes the processing and activation of pro-PanD, and subsequent substrate-mediated inhibition of the active form of PanD. Inhibition of PanD activity is probably the primary metabolic role of PanZ, allowing negative feedback regulation of pantothenate biosynthesis by CoA. In Escherichia coli (strain K12), this protein is PanD regulatory factor.